Reading from the N-terminus, the 279-residue chain is Estrogen receptor beta (279 aa).

The 235-residue stretch at 27–261 folds into the NR LBD domain; the sequence is SPEQLVLTLL…DLLLEMLNAH (235 aa).

Belongs to the nuclear hormone receptor family. NR3 subfamily. As to quaternary structure, binds DNA as a homodimer. Can form a heterodimer with ESR1. Interacts with NCOA1, NCOA3, NCOA5 and NCOA6 coactivators, leading to a strong increase of transcription of target genes. Interacts with UBE1C and AKAP13. Interacts with DNTTIP2. Interacts with CCDC62 in the presence of estradiol/E2; this interaction seems to enhance the transcription of target genes. Interacts with DNAAF4. Interacts with PRMT2. Interacts with CCAR2 (via N-terminus) in a ligand-independent manner. Interacts with RBM39, in the presence of estradiol (E2). Interacts with STUB1/CHIP.

The protein resides in the nucleus. Nuclear hormone receptor. Binds estrogens with an affinity similar to that of ESR1/ER-alpha, and activates expression of reporter genes containing estrogen response elements (ERE) in an estrogen-dependent manner. The protein is Estrogen receptor beta (ESR2) of Macaca mulatta (Rhesus macaque).